We begin with the raw amino-acid sequence, 710 residues long: Putative membrane protein IgaA homolog (710 aa).

Met1 is a topological domain (periplasmic). The helical transmembrane segment at 2-22 (STILIFIAALLACSLLAIWRF) threads the bilayer. The Cytoplasmic portion of the chain corresponds to 23–204 (RVKSRRGSLP…YALSRPAGLR (182 aa)). The next 2 membrane-spanning stretches (helical) occupy residues 205–225 (EALL…TPDV) and 226–246 (FVPW…WGLF). At 247–339 (APPSKSALRE…KNFPLQHWLR (93 aa)) the chain is on the cytoplasmic side. A helical transmembrane segment spans residues 340–360 (STVIAIGSLLVLFMLLFWIPL). Residues 361 to 656 (DMPIKFTLSW…PDKSGWWRYL (296 aa)) are Periplasmic-facing. A helical transmembrane segment spans residues 657–677 (GTTLLMLAMIVSAVYNGIQAF). Topologically, residues 678 to 710 (RRYQRHRTRMADIQEYYESCLNPRLTVSPENLI) are cytoplasmic.

This sequence belongs to the IgaA family.

Its subcellular location is the cell inner membrane. This is Putative membrane protein IgaA homolog (yrfF) from Salmonella typhi.